Consider the following 200-residue polypeptide: MNSLYRKAHYQGSAYTLSQLPPDEGMEVAFAGRSNVGKSSAINAITGIGGLARTSKTPGRTQMINFFQLDARRYLVDLPGYGYAKVPEAVKRQWQQTLSAYLEQRRALCGIVLVVDIRRLYQPFDLQMLEWCRSRGLPVRILLTKSDKLKRGAANQALQKATTHLQEVFPMARVQLFSAVNHTGIEAIQAQLDEWLGIGG.

Residues 24-198 (EGMEVAFAGR…QAQLDEWLGI (175 aa)) form the EngB-type G domain. Residues 32–39 (GRSNVGKS), 59–63 (GRTQM), 77–80 (DLPG), 144–147 (TKSD), and 177–179 (FSA) each bind GTP. Residues Ser-39 and Thr-61 each contribute to the Mg(2+) site.

This sequence belongs to the TRAFAC class TrmE-Era-EngA-EngB-Septin-like GTPase superfamily. EngB GTPase family. Mg(2+) is required as a cofactor.

Its function is as follows. Necessary for normal cell division and for the maintenance of normal septation. This Nitrosococcus oceani (strain ATCC 19707 / BCRC 17464 / JCM 30415 / NCIMB 11848 / C-107) protein is Probable GTP-binding protein EngB.